Consider the following 470-residue polypeptide: Light-independent protochlorophyllide reductase subunit N (470 aa).

Residues C24, C49, and C109 each coordinate [4Fe-4S] cluster.

It belongs to the BchN/ChlN family. Protochlorophyllide reductase is composed of three subunits; ChlL, ChlN and ChlB. Forms a heterotetramer of two ChlB and two ChlN subunits. The cofactor is [4Fe-4S] cluster.

It carries out the reaction chlorophyllide a + oxidized 2[4Fe-4S]-[ferredoxin] + 2 ADP + 2 phosphate = protochlorophyllide a + reduced 2[4Fe-4S]-[ferredoxin] + 2 ATP + 2 H2O. The protein operates within porphyrin-containing compound metabolism; chlorophyll biosynthesis (light-independent). Component of the dark-operative protochlorophyllide reductase (DPOR) that uses Mg-ATP and reduced ferredoxin to reduce ring D of protochlorophyllide (Pchlide) to form chlorophyllide a (Chlide). This reaction is light-independent. The NB-protein (ChlN-ChlB) is the catalytic component of the complex. This Acaryochloris marina (strain MBIC 11017) protein is Light-independent protochlorophyllide reductase subunit N.